The chain runs to 430 residues: Adenylosuccinate synthetase (430 aa).

GTP is bound by residues 12–18 and 40–42; these read GDEGKGK and GHT. Asp13 serves as the catalytic Proton acceptor. Asp13 and Gly40 together coordinate Mg(2+). IMP-binding positions include 13 to 16, 38 to 41, Thr128, Arg142, Gln223, Thr238, and Arg302; these read DEGK and NAGH. The Proton donor role is filled by His41. Residues 330-332 and 412-414 contribute to the GTP site; these read SID and SVG.

Belongs to the adenylosuccinate synthetase family. Homodimer. Mg(2+) serves as cofactor.

It is found in the cytoplasm. The catalysed reaction is IMP + L-aspartate + GTP = N(6)-(1,2-dicarboxyethyl)-AMP + GDP + phosphate + 2 H(+). It participates in purine metabolism; AMP biosynthesis via de novo pathway; AMP from IMP: step 1/2. Functionally, plays an important role in the de novo pathway of purine nucleotide biosynthesis. Catalyzes the first committed step in the biosynthesis of AMP from IMP. This chain is Adenylosuccinate synthetase, found in Bacillus subtilis (strain 168).